Reading from the N-terminus, the 326-residue chain is Ribonuclease H2 subunit A (326 aa).

The segment at 1 to 47 (MKDDHDAWEPEELVSDNNSSENELQEDQNSSITFLPPSVNKSNPAKS) is disordered. Residues 15 to 47 (SDNNSSENELQEDQNSSITFLPPSVNKSNPAKS) are compositionally biased toward polar residues. Residues 63-286 (PYRLGVDEAG…AKDLLELPSK (224 aa)) form the RNase H type-2 domain. Residues aspartate 69, glutamate 70, and aspartate 180 each coordinate a divalent metal cation.

It belongs to the RNase HII family. Eukaryotic subfamily. Requires Mn(2+) as cofactor. The cofactor is Mg(2+).

It catalyses the reaction Endonucleolytic cleavage to 5'-phosphomonoester.. In terms of biological role, endonuclease that specifically degrades the RNA of RNA-DNA hybrids. Participates in DNA replication. In Schizosaccharomyces pombe (strain 972 / ATCC 24843) (Fission yeast), this protein is Ribonuclease H2 subunit A (rnh201).